Here is a 153-residue protein sequence, read N- to C-terminus: Putative transcription factor YdeB (153 aa).

It belongs to the CarD family.

In Bacillus subtilis (strain 168), this protein is Putative transcription factor YdeB (ydeB).